The following is a 399-amino-acid chain: Elongation factor Tu (399 aa).

One can recognise a tr-type G domain in the interval 10–209; that stretch reads KPHVNIGTIG…EVDAYIPTPE (200 aa). The segment at 19-26 is G1; it reads GHVDHGKT. Residue 19-26 participates in GTP binding; sequence GHVDHGKT. Thr26 contributes to the Mg(2+) binding site. Residues 60–64 are G2; that stretch reads GITIA. Residues 81–84 are G3; that stretch reads DCPG. Residues 81–85 and 136–139 contribute to the GTP site; these read DCPGH and NKQD. Residues 136–139 are G4; the sequence is NKQD. The tract at residues 174-176 is G5; sequence SAL.

The protein belongs to the TRAFAC class translation factor GTPase superfamily. Classic translation factor GTPase family. EF-Tu/EF-1A subfamily. In terms of assembly, monomer.

The protein resides in the cytoplasm. The catalysed reaction is GTP + H2O = GDP + phosphate + H(+). Functionally, GTP hydrolase that promotes the GTP-dependent binding of aminoacyl-tRNA to the A-site of ribosomes during protein biosynthesis. The sequence is that of Elongation factor Tu from Helicobacter pylori (strain G27).